The following is a 347-amino-acid chain: Phenylalanine--tRNA ligase alpha subunit (347 aa).

Residue glutamate 265 participates in Mg(2+) binding.

This sequence belongs to the class-II aminoacyl-tRNA synthetase family. Phe-tRNA synthetase alpha subunit type 1 subfamily. Tetramer of two alpha and two beta subunits. Mg(2+) is required as a cofactor.

The protein localises to the cytoplasm. It catalyses the reaction tRNA(Phe) + L-phenylalanine + ATP = L-phenylalanyl-tRNA(Phe) + AMP + diphosphate + H(+). This chain is Phenylalanine--tRNA ligase alpha subunit, found in Wolbachia sp. subsp. Drosophila simulans (strain wRi).